The chain runs to 188 residues: Elongation factor P (188 aa).

It belongs to the elongation factor P family.

Its subcellular location is the cytoplasm. It functions in the pathway protein biosynthesis; polypeptide chain elongation. Functionally, involved in peptide bond synthesis. Stimulates efficient translation and peptide-bond synthesis on native or reconstituted 70S ribosomes in vitro. Probably functions indirectly by altering the affinity of the ribosome for aminoacyl-tRNA, thus increasing their reactivity as acceptors for peptidyl transferase. This Azotobacter vinelandii (strain DJ / ATCC BAA-1303) protein is Elongation factor P.